Reading from the N-terminus, the 552-residue chain is CTP synthase (552 aa).

The amidoligase domain stretch occupies residues 1-265; the sequence is MTKFVFVTGG…DRIVCEKLAL (265 aa). Ser-13 serves as a coordination point for CTP. Ser-13 is a UTP binding site. Residues 14-19 and Asp-71 contribute to the ATP site; that span reads SLGKGI. Asp-71 and Glu-139 together coordinate Mg(2+). CTP is bound by residues 146–148, 186–191, and Lys-222; these read DIE and KTKPTQ. UTP contacts are provided by residues 186–191 and Lys-222; that span reads KTKPTQ. One can recognise a Glutamine amidotransferase type-1 domain in the interval 290–545; that stretch reads TIGMVGKYVD…IKAALAHKQA (256 aa). Gly-351 is an L-glutamine binding site. Catalysis depends on Cys-378, which acts as the Nucleophile; for glutamine hydrolysis. L-glutamine-binding positions include 379-382, Glu-402, and Arg-468; that span reads LGMQ. Active-site residues include His-518 and Glu-520.

Belongs to the CTP synthase family. Homotetramer.

The enzyme catalyses UTP + L-glutamine + ATP + H2O = CTP + L-glutamate + ADP + phosphate + 2 H(+). The catalysed reaction is L-glutamine + H2O = L-glutamate + NH4(+). It catalyses the reaction UTP + NH4(+) + ATP = CTP + ADP + phosphate + 2 H(+). It participates in pyrimidine metabolism; CTP biosynthesis via de novo pathway; CTP from UDP: step 2/2. Its activity is regulated as follows. Allosterically activated by GTP, when glutamine is the substrate; GTP has no effect on the reaction when ammonia is the substrate. The allosteric effector GTP functions by stabilizing the protein conformation that binds the tetrahedral intermediate(s) formed during glutamine hydrolysis. Inhibited by the product CTP, via allosteric rather than competitive inhibition. Catalyzes the ATP-dependent amination of UTP to CTP with either L-glutamine or ammonia as the source of nitrogen. Regulates intracellular CTP levels through interactions with the four ribonucleotide triphosphates. This chain is CTP synthase, found in Herminiimonas arsenicoxydans.